The sequence spans 66 residues: Large ribosomal subunit protein bL33c (66 aa).

Belongs to the bacterial ribosomal protein bL33 family.

Its subcellular location is the plastid. It localises to the chloroplast. This Cryptomeria japonica (Japanese cedar) protein is Large ribosomal subunit protein bL33c.